A 485-amino-acid chain; its full sequence is Homospermidine synthase (485 aa).

Belongs to the saccharopine dehydrogenase family. The cofactor is NAD(+).

The catalysed reaction is 2 putrescine = sym-homospermidine + NH4(+). It carries out the reaction putrescine + spermidine = sym-homospermidine + propane-1,3-diamine. Functionally, involved in the NAD(+)-dependent synthesis of the polyamine homospermidine from putrescine. The chain is Homospermidine synthase (hss) from Mesorhizobium japonicum (strain LMG 29417 / CECT 9101 / MAFF 303099) (Mesorhizobium loti (strain MAFF 303099)).